The primary structure comprises 265 residues: Small ribosomal subunit protein uS3 (265 aa).

The KH type-2 domain occupies 39-107 (VREFLKKKLK…PVHVNIEEIR (69 aa)). Residues 211 to 265 (NDAPVVEEPQEDRRRRPGRPEGRRREGEGRPAGNRRGGAGAGRRAAPGADAKSGE) are disordered. Residues 221 to 239 (EDRRRRPGRPEGRRREGEG) show a composition bias toward basic and acidic residues.

The protein belongs to the universal ribosomal protein uS3 family. Part of the 30S ribosomal subunit. Forms a tight complex with proteins S10 and S14.

Its function is as follows. Binds the lower part of the 30S subunit head. Binds mRNA in the 70S ribosome, positioning it for translation. In Cupriavidus metallidurans (strain ATCC 43123 / DSM 2839 / NBRC 102507 / CH34) (Ralstonia metallidurans), this protein is Small ribosomal subunit protein uS3.